The chain runs to 566 residues: Cytoplasmic polyadenylation element-binding protein 2 (566 aa).

Disordered regions lie at residues 17-46 (FWGNGDQLEGKTLSSIKQQESKKMDDSVEG) and 64-98 (LERLHEKEEQECEEERLDWSEKVDSEEEEEDIQEQ). Over residues 87–98 (DSEEEEEDIQEQ) the composition is skewed to acidic residues. Residues 430–512 (MVAFIGGVPR…KRVEIKPYFF (83 aa)) enclose the RRM domain.

In terms of biological role, cytoplasmic polyadenylation element binding protein that binds to and regulates the translation of specific mRNAs. In Caenorhabditis briggsae, this protein is Cytoplasmic polyadenylation element-binding protein 2 (cpb-2).